We begin with the raw amino-acid sequence, 77 residues long: Ras-related C3 botulinum toxin substrate 1 (77 aa).

22–24 contacts GTP; the sequence is KLD. Lys-53 participates in a covalent cross-link: Glycyl lysine isopeptide (Lys-Gly) (interchain with G-Cter in ubiquitin). A GTP-binding site is contributed by 65–66; the sequence is AL.

It belongs to the small GTPase superfamily. Rho family. In terms of assembly, interacts with NISCH. Interacts with PIP5K1A. Interacts with the GTP-bound form of RAB7A. Interacts with SRGAP2. Interacts with CYFIP1/SRA-1. Interacts with PLXNB3. Interacts with ARHGDIA; the interaction is induced by SEMA5A, mediated through PLXNB3 and inactivates and stabilizes RAC1. Interacts (GTP-bound form preferentially) with PKN2 (via the REM repeats); the interaction stimulates autophosphorylation and phosphorylation of PKN2. Interacts with the GEF proteins PREX1, RASGRF2, FARP1, FARP2, DOCK1, DOCK2 and DOCK7, which promote the exchange between GDP and GTP, and therefore activate it. Interacts with PARD6A, PARD6B and PARD6G in a GTP-dependent manner. Part of a quaternary complex containing PARD3, some PARD6 protein (PARD6A, PARD6B or PARD6G) and some atypical PKC protein (PRKCI or PRKCZ), which plays a central role in epithelial cell polarization. Found in a trimeric complex composed of DOCK1 and ELMO1, which plays a central role in phagocytosis of apoptotic cells. Interacts with RALBP1 via its effector domain. Interacts with PLXNB1. Part of a complex with MAP2K3, MAP3K3, CCM2 and DEF6. Interacts with BAIAP2, BAIAP2L1 and DEF6. Interacts with Y.pseudotuberculosis YPKA and PLCB2. Interacts with NOXA1. Interacts with ARHGEF2. Interacts with TBC1D2. Interacts with UNKL. Interacts with USP6. Interacts with SPATA13. Interacts with ARHGEF16; mediates activation of RAC1 by EPHA2. Interacts with ITGB4. Interacts with S100A8 and calprotectin (S100A8/9). Interacts with PACSIN2. Interacts (when active) with PPP5C (via TPR repeats); activates PPP5C phosphatase activity and translocates PPP5C to the cell membrane. Interacts with RAPH1 (via Ras associating and PH domains). Interacts with MTSS2 (via IMD domain); this interaction may be important to potentiate PDGF-induced RAC1 activation. Interacts with PAK2. Interacts (GTP-bound form) with SH3RF1 and SH3RF3. Found in a complex with SH3RF1, MAPK8IP1/JIP1, MAP3K11/MLK3, MAP2K7/MKK7 and MAPK8/JNK1. Interacts (both active GTP- or inactive GDP-bound forms) with SH3RF2. Interacts (GTP-bound form preferentially) with CYRIB. Interacts with DOCK4 (via DOCKER domain); functions as a guanine nucleotide exchange factor (GEF) for RAC1. Interacts with GARRE1. Interacts with RAP1GDS1. May interact with ARHGAP36. Interacts with DSG3; the interaction is required for DSG3 translocation to cell-cell junctions, organization of cortical F-actin bundles and actin anchoring at cell-cell junctions. Component of the phagocyte NADPH oxidase complex composed of an obligatory core heterodimer formed by the membrane proteins CYBA and CYBB and the cytosolic regulatory subunits NCF1/p47-phox, NCF2/p67-phox, NCF4/p40-phox and the small GTPase RAC1 or RAC2. Interacts with NCF2. Post-translationally, the N-terminus is blocked. GTP-bound active form is ubiquitinated by HACE1, leading to its degradation by the proteasome.

The protein localises to the cytoplasm. The protein resides in the membrane. Its subcellular location is the melanosome. It localises to the cell projection. It is found in the lamellipodium. The protein localises to the dendrite. The protein resides in the synapse. Its subcellular location is the nucleus. It catalyses the reaction GTP + H2O = GDP + phosphate + H(+). Its activity is regulated as follows. Regulated by guanine nucleotide exchange factors (GEFs) which promote the exchange of bound GDP for free GTP, GTPase activating proteins (GAPs) which increase the GTP hydrolysis activity, and GDP dissociation inhibitors which inhibit the dissociation of the nucleotide from the GTPase. GTP hydrolysis is stimulated by ARHGAP30. Plasma membrane-associated small GTPase which cycles between active GTP-bound and inactive GDP-bound states. In its active state, binds to a variety of effector proteins to regulate cellular responses such as secretory processes, phagocytosis of apoptotic cells, epithelial cell polarization, neurons adhesion, migration and differentiation, and growth-factor induced formation of membrane ruffles. Rac1 p21/rho GDI heterodimer is the active component of the cytosolic factor sigma 1, which is involved in stimulation of the NADPH oxidase activity in macrophages. Essential for the SPATA13-mediated regulation of cell migration and adhesion assembly and disassembly. Stimulates PKN2 kinase activity. In concert with RAB7A, plays a role in regulating the formation of RBs (ruffled borders) in osteoclasts. In podocytes, promotes nuclear shuttling of NR3C2; this modulation is required for a proper kidney functioning. Required for atypical chemokine receptor ACKR2-induced LIMK1-PAK1-dependent phosphorylation of cofilin (CFL1) and for up-regulation of ACKR2 from endosomal compartment to cell membrane, increasing its efficiency in chemokine uptake and degradation. In neurons, is involved in dendritic spine formation and synaptic plasticity. In hippocampal neurons, involved in spine morphogenesis and synapse formation, through local activation at synapses by guanine nucleotide exchange factors (GEFs), such as ARHGEF6/ARHGEF7/PIX. In synapses, seems to mediate the regulation of F-actin cluster formation performed by SHANK3. In neurons, plays a crucial role in regulating GABA(A) receptor synaptic stability and hence GABAergic inhibitory synaptic transmission through its role in PAK1 activation and eventually F-actin stabilization. Required for DSG3 translocation to cell-cell junctions, DSG3-mediated organization of cortical F-actin bundles and anchoring of actin at cell junctions; via interaction with DSG3. Subunit of the phagocyte NADPH oxidase complex that mediates the transfer of electrons from cytosolic NADPH to O2 to produce the superoxide anion (O2(-)). The sequence is that of Ras-related C3 botulinum toxin substrate 1 from Cavia porcellus (Guinea pig).